The chain runs to 565 residues: Estrogen receptor gamma (565 aa).

The segment at 1–168 (MAVASSPEKD…TSGGKTDLHY (168 aa)) is modulating. NR C4-type zinc fingers lie at residues 169–189 (CAVC…CEGC) and 205–229 (CPAT…LRKC). The nuclear receptor DNA-binding region spans 169–234 (CAVCHDYASG…RLRKCYEVGM (66 aa)). Positions 235 to 285 (TKCGMRKERGNYRSPQMRRMTRLTSQGRTDSSSVLTGSAVVSLNAPQPSAL) are hinge. Residues 286-516 (TSEQLIERLM…DLLLEMLDAH (231 aa)) enclose the NR LBD domain. Residues 522 to 565 (RLPRRSPEQEPEDQADAPAPPHSSGSGPSYTWTPSSSEGAGEPQ) form a disordered region.

The protein belongs to the nuclear hormone receptor family. NR3 subfamily. As to quaternary structure, homodimer. In terms of tissue distribution, abundant in the ovary and testes, barely detectable in the brain and muscle and undetectable in the liver.

Its subcellular location is the nucleus. Functionally, the steroid hormones and their receptors are involved in the regulation of eukaryotic gene expression and affect cellular proliferation and differentiation in target tissues. The polypeptide is Estrogen receptor gamma (esr3) (Micropogonias undulatus (Atlantic croaker)).